The primary structure comprises 402 residues: Multidrug resistance protein MdtH (402 aa).

Over 1–12 (MSRVSQARNLGK) the chain is Cytoplasmic. Residues 13-33 (YFLLIDNMLVVLGFFVVFPLI) form a helical membrane-spanning segment. Topologically, residues 34–98 (SIRFVDQMGW…GFATMGIAHE (65 aa)) are periplasmic. Residues 99 to 116 (PWLLWFSCFLSGLGGTLF) traverse the membrane as a helical segment. Topologically, residues 117–138 (DPPRSALVVKLIRPEQRGRFFS) are cytoplasmic. The helical transmembrane segment at 139 to 159 (LLMMQDSAGAVIGALLGSWLL) threads the bilayer. Topologically, residues 160 to 164 (QYDFR) are periplasmic. The helical transmembrane segment at 165–185 (LVCATGAILFILCALFNAWLL) threads the bilayer. Residues 186 to 213 (PAWKLSTVRTPVREGMRRVMSDKRFVTY) are Cytoplasmic-facing. A helical transmembrane segment spans residues 214–234 (VLTLAGYYMLAVQVMLMLPIM). The Periplasmic portion of the chain corresponds to 235-243 (VNDIAGSPA). Residues 244-264 (AVKWMYAIEACLSLTLLYPIA) traverse the membrane as a helical segment. At 265–276 (RWSEKRFRLEHR) the chain is on the cytoplasmic side. The helical transmembrane segment at 277-297 (LMAGLLVMSLSMIPIGMVGNL) threads the bilayer. Residues 298–299 (QQ) are Periplasmic-facing. Residues 300–320 (LFTLICAFYIGSVIAEPARET) traverse the membrane as a helical segment. Over 321-339 (LSASLADARARGSYMGFSR) the chain is Cytoplasmic. Residues 340-360 (LGLAIGGAIGYIGGGWLFDMG) form a helical membrane-spanning segment. Residues 361–367 (KALAQPE) are Periplasmic-facing. The helical transmembrane segment at 368–388 (LPWMMLGIIGFITFLALGWQF) threads the bilayer. At 389–402 (SHKRTPRRMLEPGA) the chain is on the cytoplasmic side.

The protein belongs to the major facilitator superfamily. DHA1 family. MdtH (TC 2.A.1.2.21) subfamily.

The protein resides in the cell inner membrane. The chain is Multidrug resistance protein MdtH from Salmonella schwarzengrund (strain CVM19633).